Consider the following 495-residue polypeptide: Sialin (495 aa).

The interval Met1–Gln24 is disordered. Residue Ser3 is modified to Phosphoserine. The short motif at Leu22–Leu23 is the Dileucine internalization motif element. Residues Leu42 to Val62 form a helical membrane-spanning segment. N-linked (GlcNAc...) asparagine glycans are attached at residues Asn71, Asn77, and Asn95. The next 11 membrane-spanning stretches (helical) occupy residues Trp110–Ala130, Leu137–Ala157, Phe159–Tyr179, Ile201–Cys221, Tyr228–Val248, Leu289–Leu309, Phe329–Ala349, Val366–Gly386, Ala392–Ile412, Ile424–Ala444, and Thr458–Ala478.

Belongs to the major facilitator superfamily. Sodium/anion cotransporter family. In terms of tissue distribution, significantly expressed in lung endothelial cells, and much less in liver.

It localises to the basolateral cell membrane. It is found in the cytoplasmic vesicle. The protein resides in the secretory vesicle. The protein localises to the synaptic vesicle membrane. Its subcellular location is the lysosome membrane. It catalyses the reaction N-acetylneuraminate(in) + H(+)(in) = N-acetylneuraminate(out) + H(+)(out). The enzyme catalyses D-glucuronate(out) + H(+)(out) = D-glucuronate(in) + H(+)(in). The catalysed reaction is 2 nitrate(out) + H(+)(out) = 2 nitrate(in) + H(+)(in). It carries out the reaction L-aspartate(out) = L-aspartate(in). It catalyses the reaction L-glutamate(out) = L-glutamate(in). The enzyme catalyses N-acetyl-L-aspartyl-L-glutamate(out) = N-acetyl-L-aspartyl-L-glutamate(in). Multifunctional anion transporter that operates via two distinct transport mechanisms, namely proton-coupled anion cotransport and membrane potential-dependent anion transport. Electroneutral proton-coupled acidic monosaccharide symporter, with a sugar to proton stoichiometry of 1:1. Exports glucuronic acid and free sialic acid derived from sialoglycoconjugate degradation out of lysosomes, driven by outwardly directed lysosomal pH gradient. May regulate lysosome function and metabolism of sialylated conjugates that impact oligodendrocyte lineage differentiation and myelinogenesis in the central nervous system. Electrogenic proton-coupled nitrate symporter that transports nitrate ions across the basolateral membrane of salivary gland acinar cells, with nitrate to proton stoichiometry of 2:1. May contribute to nitrate clearance from serum by salivary glands, where it is further concentrated and secreted in the saliva. Uses membrane potential to drive the uptake of acidic amino acids and peptides into synaptic vesicles. Responsible for synaptic vesicular storage of L-aspartate and L-glutamate in pinealocytes as well as vesicular uptake of N-acetyl-L-aspartyl-L-glutamate neuropeptide, relevant to aspartegic-associated glutamatergic neurotransmission and activation of metabotropic receptors that inhibit subsequent transmitter release. In terms of biological role, receptor for CM101, a polysaccharide produced by group B Streptococcus with antipathoangiogenic properties. In Ovis aries (Sheep), this protein is Sialin (SLC17A5).